Reading from the N-terminus, the 272-residue chain is Pyridoxal phosphate phosphatase YbhA (272 aa).

The Nucleophile role is filled by D9. D9 lines the Mg(2+) pocket. Residue L10 participates in phosphate binding. D11 contacts Mg(2+). Phosphate contacts are provided by residues 43 to 44 (TG) and K200. Residue D223 participates in Mg(2+) binding. N226 provides a ligand contact to phosphate.

This sequence belongs to the HAD-like hydrolase superfamily. CbbY/CbbZ/Gph/YieH family. Mg(2+) is required as a cofactor. Requires Mn(2+) as cofactor. It depends on Co(2+) as a cofactor. The cofactor is Zn(2+).

The enzyme catalyses pyridoxal 5'-phosphate + H2O = pyridoxal + phosphate. Its function is as follows. Catalyzes the dephosphorylation of pyridoxal-phosphate (PLP). Can also hydrolyze erythrose-4-phosphate (Ery4P) and fructose-1,6-bis-phosphate (Fru1,6bisP). The sequence is that of Pyridoxal phosphate phosphatase YbhA (ybhA) from Escherichia coli (strain K12).